Here is a 192-residue protein sequence, read N- to C-terminus: Imidazoleglycerol-phosphate dehydratase (192 aa).

It belongs to the imidazoleglycerol-phosphate dehydratase family.

It localises to the cytoplasm. The enzyme catalyses D-erythro-1-(imidazol-4-yl)glycerol 3-phosphate = 3-(imidazol-4-yl)-2-oxopropyl phosphate + H2O. Its pathway is amino-acid biosynthesis; L-histidine biosynthesis; L-histidine from 5-phospho-alpha-D-ribose 1-diphosphate: step 6/9. The protein is Imidazoleglycerol-phosphate dehydratase of Clostridioides difficile (strain 630) (Peptoclostridium difficile).